A 472-amino-acid polypeptide reads, in one-letter code: 3-isopropylmalate dehydratase large subunit (472 aa).

Residues Cys347, Cys407, and Cys410 each contribute to the [4Fe-4S] cluster site.

It belongs to the aconitase/IPM isomerase family. LeuC type 1 subfamily. In terms of assembly, heterodimer of LeuC and LeuD. Requires [4Fe-4S] cluster as cofactor.

It catalyses the reaction (2R,3S)-3-isopropylmalate = (2S)-2-isopropylmalate. The protein operates within amino-acid biosynthesis; L-leucine biosynthesis; L-leucine from 3-methyl-2-oxobutanoate: step 2/4. Catalyzes the isomerization between 2-isopropylmalate and 3-isopropylmalate, via the formation of 2-isopropylmaleate. This is 3-isopropylmalate dehydratase large subunit from Opitutus terrae (strain DSM 11246 / JCM 15787 / PB90-1).